The following is a 327-amino-acid chain: Serpentine receptor class gamma-2 (327 aa).

The next 6 membrane-spanning stretches (helical) occupy residues 35 to 55 (LVQF…LYIL), 70 to 90 (ILFI…IFFA), 157 to 177 (MKYA…NIII), 181 to 203 (LPVY…ATMT), 244 to 264 (IASF…SLFA), and 277 to 297 (FLLP…MVMA).

Belongs to the nematode receptor-like protein srg family.

The protein resides in the membrane. This is Serpentine receptor class gamma-2 (srg-2) from Caenorhabditis elegans.